Reading from the N-terminus, the 553-residue chain is MSEIALTVSVLALVAVVGLWIGNVKIRGVGFGIGGVLFGGIIVGHFVDQAGVALSSPMLHFIQEFGLILFVYTIGIQVGPGFFASLRVSGLRLNLFAILIVILGGLVTAVLHKLFDIPLPVVLGIFSGAVTNTPALGAGQQILRDLGVPFEVVDQMGMSYAMAYPFGICGILLTMWLVRLFFRINVEKEAQRFEESSGNGHAHLHTINVRVENPNLNQMAIQDVPMLNSDNIVCSRLKRGELLMVPAPGTLIQAGDLLHLVGRPEDLHNAQLVIGQEVATSLSTRGTDLKVERVVVTNEKVLGKKIRDLHVKQRYDVVISRLNRAGVELVASSSASLQFGDILNLVGRQEAIDAVAAELGNAQQKLQQVQMLPVFIGIGLGVLLGSIPLFIPGFPAALKLGLAGGPLIMALILGRIGSIGKLYWFMPPSANLALRELGIVLFLAVVGLKSGGDFVATLTQGEGLSWIAYGIFITAIPLLTVGILARMLAKMNYLTLCGMLAGSMTDPPALAFANNLHATSGAAALSYATVYPLVMFLRIITPQLLAVLFWGLS.

The next 5 helical transmembrane spans lie at 4–24 (IALTVSVLALVAVVGLWIGNV), 28–48 (GVGFGIGGVLFGGIIVGHFVD), 65–85 (FGLILFVYTIGIQVGPGFFAS), 95–115 (LFAILIVILGGLVTAVLHKLF), and 158–178 (MSYAMAYPFGICGILLTMWLV). RCK C-terminal domains lie at 192-276 (RFEE…VIGQ) and 279-361 (ATSL…ELGN). 6 helical membrane-spanning segments follow: residues 371–391 (MLPVFIGIGLGVLLGSIPLFI), 403–425 (AGGPLIMALILGRIGSIGKLYWF), 437–457 (LGIVLFLAVVGLKSGGDFVAT), 464–484 (LSWIAYGIFITAIPLLTVGIL), 493–513 (YLTLCGMLAGSMTDPPALAFA), and 532–552 (PLVMFLRIITPQLLAVLFWGL).

The protein belongs to the AAE transporter (TC 2.A.81) family. YidE subfamily.

The protein resides in the cell membrane. The chain is Putative transport protein KPK_0013 from Klebsiella pneumoniae (strain 342).